The chain runs to 130 residues: MSAKLSTNSKKKIKRNIGEGNVYIQATFNNTIVTVSDIKGNALAWASAGGMGFKGAKKSTPYAAQITAESALNKVRDFGINYVHVYIKGPGIGRESAIRAIGSIGMTVKSISDITPIPHNGCRPKKTRRV.

It belongs to the universal ribosomal protein uS11 family. Part of the 30S ribosomal subunit. Interacts with proteins S7 and S18. Binds to IF-3.

Located on the platform of the 30S subunit, it bridges several disparate RNA helices of the 16S rRNA. Forms part of the Shine-Dalgarno cleft in the 70S ribosome. The chain is Small ribosomal subunit protein uS11 from Borreliella afzelii (strain PKo) (Borrelia afzelii).